Consider the following 435-residue polypeptide: UPF0761 membrane protein mma_2179 (435 aa).

A run of 6 helical transmembrane segments spans residues 45 to 65 (VLAL…FPLF), 103 to 123 (LSAF…LMID), 142 to 162 (ILVY…SMTF), 177 to 197 (VPFV…MVAF), 208 to 228 (LVEW…FEIV), and 252 to 272 (FPIF…GAVV).

Belongs to the UPF0761 family.

It localises to the cell inner membrane. This is UPF0761 membrane protein mma_2179 from Janthinobacterium sp. (strain Marseille) (Minibacterium massiliensis).